Consider the following 217-residue polypeptide: MDNARFEDQLAAGCRALGVTVAADLGPRLQRLMSELLKWNAKVNLTAITAPEEVLEKHFLDSLAVLPEVTGAATLLDLGAGAGFPGLPLKLALPALGVTLVDTVGKKVAFIKAAAASLGLQGVRGLHARAEGQPETEGIPRAEVLIARAFMDLPDWLALAPAYVEPGGRVVAMLGKPQTDAELAARAAERQLRVVSARAYRLPFSGAERQVAVFAKE.

S-adenosyl-L-methionine contacts are provided by residues Gly-79, Phe-84, 130–131 (AE), and Arg-148.

It belongs to the methyltransferase superfamily. RNA methyltransferase RsmG family.

The protein resides in the cytoplasm. It catalyses the reaction guanosine(527) in 16S rRNA + S-adenosyl-L-methionine = N(7)-methylguanosine(527) in 16S rRNA + S-adenosyl-L-homocysteine. Functionally, specifically methylates the N7 position of guanine in position 527 of 16S rRNA. The chain is Ribosomal RNA small subunit methyltransferase G from Myxococcus xanthus (strain DK1622).